A 68-amino-acid chain; its full sequence is Conotoxin Mr3.3 (68 aa).

A signal peptide spans 1–19; it reads MSRLGVLLTICLLLFPLTA. Positions 20–51 are excised as a propeptide; that stretch reads VPLDGDQPADRPAERLQDDISSEHHPHFDSGR. The disordered stretch occupies residues 22-46; sequence LDGDQPADRPAERLQDDISSEHHPH. A compositionally biased stretch (basic and acidic residues) spans 27–46; sequence PADRPAERLQDDISSEHHPH. 3 disulfide bridges follow: Cys53–Cys67, Cys54–Cys63, and Cys59–Cys66. Pro65 carries the 4-hydroxyproline modification.

It belongs to the conotoxin M superfamily. In terms of tissue distribution, expressed by the venom duct.

The protein localises to the secreted. The polypeptide is Conotoxin Mr3.3 (Conus marmoreus (Marble cone)).